A 490-amino-acid chain; its full sequence is 23S rRNA (uracil(1939)-C(5))-methyltransferase RlmD (490 aa).

Positions 14–75 (APAPAEYPID…SSFEKATLTA (62 aa)) constitute a TRAM domain. Positions 88, 98, 101, and 180 each coordinate [4Fe-4S] cluster. Q289, F318, N323, E339, N374, and D395 together coordinate S-adenosyl-L-methionine. The active-site Nucleophile is the C446.

Belongs to the class I-like SAM-binding methyltransferase superfamily. RNA M5U methyltransferase family. RlmD subfamily.

It catalyses the reaction uridine(1939) in 23S rRNA + S-adenosyl-L-methionine = 5-methyluridine(1939) in 23S rRNA + S-adenosyl-L-homocysteine + H(+). In terms of biological role, catalyzes the formation of 5-methyl-uridine at position 1939 (m5U1939) in 23S rRNA. This chain is 23S rRNA (uracil(1939)-C(5))-methyltransferase RlmD, found in Polaromonas naphthalenivorans (strain CJ2).